The primary structure comprises 2360 residues: DNA (cytosine-5-)-methyltransferase DMT5 (2360 aa).

One can recognise an SAM-dependent MTase C5-type domain in the interval F48 to V507. C146 is an active-site residue. The Helicase ATP-binding domain maps to A1258 to H1575. An ATP-binding site is contributed by H1271 to T1278. The interval S1451–D1498 is disordered. The segment covering Q1465–R1476 has biased composition (basic residues). An RING-type; degenerate zinc finger spans residues C2018–S2070. Residues K2102 to K2267 enclose the Helicase C-terminal domain.

In the N-terminal section; belongs to the class I-like SAM-binding methyltransferase superfamily. C5-methyltransferase family. This sequence in the C-terminal section; belongs to the SNF2/RAD54 helicase family.

It localises to the nucleus. The protein resides in the chromosome. The enzyme catalyses a 2'-deoxycytidine in DNA + S-adenosyl-L-methionine + ATP + H2O = a 5-methyl-2'-deoxycytidine in DNA + S-adenosyl-L-homocysteine + ADP + phosphate + 2 H(+). May play a role in cytosine methylation at palindromic 5'-CG-3' and 5'-C[ACT]G-3' sites in DNA. This chain is DNA (cytosine-5-)-methyltransferase DMT5, found in Verticillium dahliae (strain VdLs.17 / ATCC MYA-4575 / FGSC 10137) (Verticillium wilt).